We begin with the raw amino-acid sequence, 141 residues long: Hemoglobin subunit beta-C (141 aa).

Residues 1–141 (PNKALITGFW…VASALAHRYH (141 aa)) enclose the Globin domain. Residues His58 and His87 each contribute to the heme b site.

This sequence belongs to the globin family. Heterotetramer of two alpha chains and two beta chains. In terms of tissue distribution, red blood cells.

Its function is as follows. Involved in oxygen transport from the lung to the various peripheral tissues. In Ammotragus lervia (Barbary sheep), this protein is Hemoglobin subunit beta-C.